The primary structure comprises 240 residues: Superoxide dismutase [Cu-Zn] (240 aa).

Positions 1–32 (MPKPADHRNHAAVSTSVLSALFLGAGAALLSA) are cleaved as a signal peptide. Cysteine 33 is lipidated: N-palmitoyl cysteine. Cysteine 33 is lipidated: S-diacylglycerol cysteine. Composition is skewed to polar residues over residues 36–51 (PQHASTVPGTTPSIWT) and 68–77 (GAQSLTSTLT). Residues 36 to 77 (PQHASTVPGTTPSIWTGSPAPSGLSGHDEESPGAQSLTSTLT) are disordered. 2 residues coordinate Cu cation: histidine 116 and histidine 118. A disulfide bond links cysteine 123 and cysteine 234. The Zn(2+) site is built by histidine 146 and aspartate 158. Histidine 195 is a binding site for Cu cation.

This sequence belongs to the Cu-Zn superoxide dismutase family. The cofactor is Cu cation. Zn(2+) is required as a cofactor.

The protein resides in the cell membrane. It carries out the reaction 2 superoxide + 2 H(+) = H2O2 + O2. With respect to regulation, inhibited by the copper chelator diethyl dithiocarbamate. In terms of biological role, destroys radicals which are normally produced within the cells and which are toxic to biological systems. May play a role in favoring mycobacterial survival in phagocytes. This Mycobacterium bovis (strain ATCC BAA-935 / AF2122/97) protein is Superoxide dismutase [Cu-Zn] (sodC).